Reading from the N-terminus, the 590-residue chain is MVNSNEEDERRILDVEESLLTQEEVNNHLTGLSSTAEDGSIDIYGNPPSKKKTGNWKACPFILGNECCERLAYYGIAKNLITYYTSELHESNVSAASDVMIWQGTCYITPLIGAVIADSYWGRYWTIASFSAIYFIGMALLTLSASLPVLKPAACAGVAAALCSPATTVQYAVFFTGLYLIALGTGGIKPCVSSFGADQFDDTDPRERVRKASFFNWFYFSINIGSFISSTLLVWVQENVGWGLGFLIPTVFMGVSIASFFIGTPLYRFQKPGGSPITRVCQVLVAAYRKLKLNLPEDISFLYETREKNSMIAGSRKIQHTDGYKFLDKAAVISEYESKSGAFSNPWKLCTVTQVEEVKTLIRMFPIWASGIVYSVLYSQISTLFVQQGRSMNRIIRSFEIPPASFGVFDTLIVLISIPIYDRFLVPFVRRFTGIPKGLTDLQRMGIGLFLSVLSIAAAAIVETVRLQLAQDFVAMSIFWQIPQYILMGIAEVFFFIGRVEFFYDESPDAMRSVCSALALLNTAVGSYLSSLILTLVAYFTALGGKDGWVPDDLNKGHLDYFFWLLVSLGLVNIPVYALICVKHTKKKAL.

A helical transmembrane segment spans residues 96–116 (ASDVMIWQGTCYITPLIGAVI). A Phosphothreonine modification is found at threonine 126. The next 10 helical transmembrane spans lie at 130-150 (FSAIYFIGMALLTLSASLPVL), 168-188 (TVQYAVFFTGLYLIALGTGGI), 214-234 (FFNWFYFSINIGSFISSTLLV), 242-262 (WGLGFLIPTVFMGVSIASFFI), 365-385 (FPIWASGIVYSVLYSQISTLF), 401-421 (IPPASFGVFDTLIVLISIPIY), 445-465 (MGIGLFLSVLSIAAAAIVETV), 478-498 (IFWQIPQYILMGIAEVFFFIG), 524-544 (AVGSYLSSLILTLVAYFTALG), and 562-582 (FFWLLVSLGLVNIPVYALICV).

Belongs to the major facilitator superfamily. Proton-dependent oligopeptide transporter (POT/PTR) (TC 2.A.17) family. In terms of tissue distribution, expressed in shoots, roots, stems, leaves, flowers and siliques.

The protein resides in the membrane. This is Protein NRT1/ PTR FAMILY 8.5 (NPF8.5) from Arabidopsis thaliana (Mouse-ear cress).